A 247-amino-acid polypeptide reads, in one-letter code: Mitochondrial inner membrane protease ATP23 (247 aa).

Residue H146 participates in a divalent metal cation binding. E147 is a catalytic residue. H150 is an a divalent metal cation binding site.

It belongs to the peptidase M76 family.

Its subcellular location is the mitochondrion inner membrane. Functionally, has a dual role in the assembly of mitochondrial ATPase. Acts as a protease that removes N-terminal residues of mitochondrial ATPase CF(0) subunit 6 at the intermembrane space side. Also involved in the correct assembly of the membrane-embedded ATPase CF(0) particle, probably mediating association of subunit 6 with the subunit 9 ring. This Eremothecium gossypii (strain ATCC 10895 / CBS 109.51 / FGSC 9923 / NRRL Y-1056) (Yeast) protein is Mitochondrial inner membrane protease ATP23 (ATP23).